Consider the following 1048-residue polypeptide: Anguibactin system regulator (1048 aa).

The region spanning 965-1039 is the Carrier domain; it reads PIITASEDRV…AFAIIMDRCR (75 aa).

It belongs to the ATP-dependent AMP-binding enzyme family.

The protein operates within siderophore biosynthesis; anguibactin biosynthesis. In terms of biological role, bifunctional protein that plays an essential role in virulence. Plays a role in both the production of the siderophore anguibactin and the regulation of iron transport genes. The protein is Anguibactin system regulator (angR) of Vibrio anguillarum (Listonella anguillarum).